We begin with the raw amino-acid sequence, 388 residues long: Processive diacylglycerol beta-glucosyltransferase (388 aa).

Belongs to the glycosyltransferase 28 family. UgtP subfamily.

It is found in the cell membrane. It carries out the reaction a 1,2-diacyl-3-O-(beta-D-glucopyranosyl)-sn-glycerol + UDP-alpha-D-glucose = a 1,2-diacyl-3-O-(beta-D-Glc-(1-&gt;6)-beta-D-Glc)-sn-glycerol + UDP + H(+). It catalyses the reaction a 1,2-diacyl-3-O-(beta-D-Glc-(1-&gt;6)-beta-D-Glc)-sn-glycerol + UDP-alpha-D-glucose = a 1,2-diacyl-3-O-(beta-D-Glc-(1-&gt;6)-beta-D-Glc-(1-&gt;6)-beta-D-Glc)-sn-glycerol + UDP + H(+). The enzyme catalyses a 1,2-diacyl-sn-glycerol + UDP-alpha-D-glucose = a 1,2-diacyl-3-O-(beta-D-glucopyranosyl)-sn-glycerol + UDP + H(+). The protein operates within glycolipid metabolism; diglucosyl-diacylglycerol biosynthesis. Functionally, processive glucosyltransferase involved in the biosynthesis of both the bilayer- and non-bilayer-forming membrane glucolipids. Is able to successively transfer up to three glucosyl residues to diacylglycerol (DAG), thereby catalyzing the formation of beta-monoglucosyl-DAG (3-O-(beta-D-glucopyranosyl)-1,2-diacyl-sn-glycerol), beta-diglucosyl-DAG (3-O-(beta-D-glucopyranosyl-beta-(1-&gt;6)-D-glucopyranosyl)-1,2-diacyl-sn-glycerol) and beta-triglucosyl-DAG (3-O-(beta-D-glucopyranosyl-beta-(1-&gt;6)-D-glucopyranosyl-beta-(1-&gt;6)-D-glucopyranosyl)-1,2-diacyl-sn-glycerol). Beta-diglucosyl-DAG is the predominant glycolipid found in Bacillales and is also used as a membrane anchor for lipoteichoic acid (LTA). The sequence is that of Processive diacylglycerol beta-glucosyltransferase from Bacillus cereus (strain ATCC 14579 / DSM 31 / CCUG 7414 / JCM 2152 / NBRC 15305 / NCIMB 9373 / NCTC 2599 / NRRL B-3711).